Reading from the N-terminus, the 537-residue chain is MSILSLVEDRPTPKEVYNWKIYLLAAVASCTSCMIGYDSAFIGTTISLQSFKDEFDWDSMSAAHQDLVSSNIVSLYQAGAFFGAFFAYPIGHFWGRKWGLMVSALIFTLGAGIMLGTNGDRGFGLLYGGRVLAGLGVGAGSNITPIYISELSPPAIRGRLVGVYELGWQIGGLVGFWICYGVDETLPPSHKQWIIPFAVQLIPSGLLIIGALFLKESPRWLFLRGRREEAIKNLCWIRQLPEDHVYMIEEIGAIDQTLEHQRATIGLGFWKPFAAAWTNKKILYRLFLGSMLFFWQNGSGINAINYYSPTVFKSIGVTGSNTSLFTTGIFGVVKTVVTFIWLLWLIDRVGRRLLLLIGAAGGSICLWIVGAYIKIARPSERENKQMDGGGIAAMFFFYLWTVFYTPSWNGTPWVINSEMFDPNIRSLAQACAAGSNWLWNFLISRFTPQMFAKMDYGVYFFFASLMILSIIFVFFLIPETKGIPLESMDRLFETQPIWRAHGTLLKQIREDEERFRHDLEDSGFVKSTDRQVEVVDA.

Residues 1 to 22 are Cytoplasmic-facing; the sequence is MSILSLVEDRPTPKEVYNWKIY. Residues 23-43 form a helical membrane-spanning segment; that stretch reads LLAAVASCTSCMIGYDSAFIG. Topologically, residues 44-74 are extracellular; it reads TTISLQSFKDEFDWDSMSAAHQDLVSSNIVS. Residues 75–95 traverse the membrane as a helical segment; that stretch reads LYQAGAFFGAFFAYPIGHFWG. Residues 96–97 lie on the Cytoplasmic side of the membrane; that stretch reads RK. Residues 98–118 form a helical membrane-spanning segment; the sequence is WGLMVSALIFTLGAGIMLGTN. Topologically, residues 119–130 are extracellular; sequence GDRGFGLLYGGR. The chain crosses the membrane as a helical span at residues 131–151; the sequence is VLAGLGVGAGSNITPIYISEL. The Cytoplasmic portion of the chain corresponds to 152 to 159; sequence SPPAIRGR. The chain crosses the membrane as a helical span at residues 160 to 180; it reads LVGVYELGWQIGGLVGFWICY. The Extracellular portion of the chain corresponds to 181–193; the sequence is GVDETLPPSHKQW. The helical transmembrane segment at 194 to 214 threads the bilayer; that stretch reads IIPFAVQLIPSGLLIIGALFL. Residues 215–285 lie on the Cytoplasmic side of the membrane; the sequence is KESPRWLFLR…AWTNKKILYR (71 aa). Residues 286–306 traverse the membrane as a helical segment; that stretch reads LFLGSMLFFWQNGSGINAINY. The Extracellular portion of the chain corresponds to 307-325; sequence YSPTVFKSIGVTGSNTSLF. Residues 326–346 form a helical membrane-spanning segment; it reads TTGIFGVVKTVVTFIWLLWLI. Topologically, residues 347–352 are cytoplasmic; the sequence is DRVGRR. Residues 353-373 form a helical membrane-spanning segment; it reads LLLLIGAAGGSICLWIVGAYI. Residues 374-387 are Extracellular-facing; that stretch reads KIARPSERENKQMD. Residues 388–408 form a helical membrane-spanning segment; that stretch reads GGGIAAMFFFYLWTVFYTPSW. Topologically, residues 409-456 are cytoplasmic; the sequence is NGTPWVINSEMFDPNIRSLAQACAAGSNWLWNFLISRFTPQMFAKMDY. The helical transmembrane segment at 457 to 477 threads the bilayer; it reads GVYFFFASLMILSIIFVFFLI. Residues 478–537 are Extracellular-facing; sequence PETKGIPLESMDRLFETQPIWRAHGTLLKQIREDEERFRHDLEDSGFVKSTDRQVEVVDA.

It belongs to the major facilitator superfamily. Sugar transporter (TC 2.A.1.1) family. In terms of assembly, interacts with creB. Post-translationally, ubiquitinated. Deubiquitinated by creB, probably to control its activity or amount.

It localises to the cell membrane. In terms of biological role, integral membrane transporter that imports quinic acid to be catabolized as a carbon source. This chain is Probable quinate permease (qutD), found in Aspergillus flavus (strain ATCC 200026 / FGSC A1120 / IAM 13836 / NRRL 3357 / JCM 12722 / SRRC 167).